We begin with the raw amino-acid sequence, 264 residues long: Low molecular mass lipoprotein PBMHP-12 (264 aa).

The first 16 residues, 1–16 (MKLLVVFAMCVPAASA), serve as a signal peptide directing secretion.

Belongs to the 30 kDa lipoprotein family.

It is found in the secreted. This chain is Low molecular mass lipoprotein PBMHP-12, found in Bombyx mori (Silk moth).